The sequence spans 85 residues: Putative membrane protein insertion efficiency factor (85 aa).

It belongs to the UPF0161 family.

The protein resides in the cell membrane. Its function is as follows. Could be involved in insertion of integral membrane proteins into the membrane. The protein is Putative membrane protein insertion efficiency factor of Leifsonia xyli subsp. xyli (strain CTCB07).